Reading from the N-terminus, the 91-residue chain is Defensin-like protein 269 (91 aa).

An N-terminal signal peptide occupies residues 1–25 (MAVSKTTMLIVLVAIILSCVSISNA). 4 disulfide bridges follow: Cys-41–Cys-82, Cys-53–Cys-72, Cys-59–Cys-77, and Cys-63–Cys-79.

This sequence belongs to the DEFL family.

It localises to the secreted. The polypeptide is Defensin-like protein 269 (Arabidopsis thaliana (Mouse-ear cress)).